The sequence spans 267 residues: Indole-3-glycerol phosphate synthase (267 aa).

The protein belongs to the TrpC family.

It carries out the reaction 1-(2-carboxyphenylamino)-1-deoxy-D-ribulose 5-phosphate + H(+) = (1S,2R)-1-C-(indol-3-yl)glycerol 3-phosphate + CO2 + H2O. It participates in amino-acid biosynthesis; L-tryptophan biosynthesis; L-tryptophan from chorismate: step 4/5. This chain is Indole-3-glycerol phosphate synthase, found in Deinococcus radiodurans (strain ATCC 13939 / DSM 20539 / JCM 16871 / CCUG 27074 / LMG 4051 / NBRC 15346 / NCIMB 9279 / VKM B-1422 / R1).